Consider the following 346-residue polypeptide: D-alanine--D-alanine ligase (346 aa).

In terms of domain architecture, ATP-grasp spans Lys-133–Glu-324. An ATP-binding site is contributed by Leu-159 to Tyr-211. The Mg(2+) site is built by Asp-284, Glu-296, and Asn-298.

The protein belongs to the D-alanine--D-alanine ligase family. Mg(2+) serves as cofactor. The cofactor is Mn(2+).

It is found in the cytoplasm. It catalyses the reaction 2 D-alanine + ATP = D-alanyl-D-alanine + ADP + phosphate + H(+). It functions in the pathway cell wall biogenesis; peptidoglycan biosynthesis. Cell wall formation. The chain is D-alanine--D-alanine ligase from Campylobacter lari (strain RM2100 / D67 / ATCC BAA-1060).